We begin with the raw amino-acid sequence, 439 residues long: Enolase (439 aa).

His157 and Glu166 together coordinate substrate. Glu209 serves as the catalytic Proton donor. Mg(2+) is bound by residues Asp244, Glu297, and Asp324. The substrate site is built by Glu297 and Asp324. The Proton acceptor role is filled by Lys349. Substrate-binding positions include 376 to 379 (SHRS) and Lys400.

It belongs to the enolase family. As to quaternary structure, homodimer. Mg(2+) serves as cofactor.

It is found in the cytoplasm. It carries out the reaction (2R)-2-phosphoglycerate = phosphoenolpyruvate + H2O. It functions in the pathway carbohydrate degradation; glycolysis; pyruvate from D-glyceraldehyde 3-phosphate: step 4/5. The protein is Enolase (ENOL) of Mastigamoeba balamuthi (Phreatamoeba balamuthi).